Reading from the N-terminus, the 193-residue chain is dCTP deaminase, dUMP-forming (193 aa).

Residues 101-106 (KSSLGR), D119, 127-129 (TLE), Q148, Y162, and Q174 contribute to the dCTP site. Residue E129 is the Proton donor/acceptor of the active site.

The protein belongs to the dCTP deaminase family. As to quaternary structure, homotrimer.

It carries out the reaction dCTP + 2 H2O = dUMP + NH4(+) + diphosphate. It participates in pyrimidine metabolism; dUMP biosynthesis; dUMP from dCTP: step 1/1. Functionally, bifunctional enzyme that catalyzes both the deamination of dCTP to dUTP and the hydrolysis of dUTP to dUMP without releasing the toxic dUTP intermediate. The polypeptide is dCTP deaminase, dUMP-forming (Bifidobacterium adolescentis (strain ATCC 15703 / DSM 20083 / NCTC 11814 / E194a)).